The sequence spans 421 residues: Hydrolyase poxO (421 aa).

Residue serine 239 is the Nucleophile of the active site.

Belongs to the AB hydrolase superfamily. FUS2 hydrolase family. As to quaternary structure, homodimer.

Its pathway is secondary metabolite biosynthesis. Hydrolyase; part of the gene cluster that mediates the biosynthesis of oxaleimides, cytotoxic compounds containing an unusual disubstituted succinimide moiety. The first step of the pathway is provided by the HR-PKS poxF that serves in a new mode of collaborative biosynthesis with the PKS-NRPS poxE, by providing the olefin containing amino acid substrate via the synthesis of an ACP-bound dec-4-enoate. The cytochrome P450 monooxygenase poxM-catalyzed oxidation at the alpha-position creates the enzyme-bound 2-hydroxydec-4-enoyl-ACP thioester, which may be prone to spontaneous hydrolysis to yield 2-hydroxydec-4-enoic acid due to increased electrophilicity of the carbonyl. 2-hydroxydec-4-enoic acid can then be further oxidized by poxM to yield the alpha-ketoacid 2-oxodec-4-enoicacid, which is reductively aminated by the aminotransferase poxL to yield (S,E)-2-aminodec-4-enoic acid. The Hybrid PKS-NRPS synthetase poxE then performs condensation between the octaketide product of its PKS modules and the amino group of (S,E)-2-aminodec-4-enoic acid which is activated and incorporated by the adenylation domain. The resulting aminoacyl product can be cyclized by the Diels-Alderase PoxQ and reductively released by the reductive (R) domain of poxE to yield an aldehyde intermediate. The released aldehyde is then substrate for a Knoevenagel condensation by the hydrolyase poxO followed by an oxidation at the 5-position of the pyrrolidone ring. The presence of the olefin from the amino acid building block allows for migration of the substituted allyl group to occur. This allylic transposition reaction takes place in a conjugate addition, semipinacol-like fashion to yield a succinimide intermediate. Iterative two-electron oxidations of the C7 methyl of the succinimide intermediate to the carboxylic acid can be catalyzed by one of two remaining cytochrome P450 monooxygenasess poxC or poxD to yield oxaleimide A. Subsequent oxidation yields the maleimide scaffold oxaleimide I. Both oxaleimide A and oxaleimide I can undergo oxidative modifications in the decalin ring to yield the series of products oxaleimides B to H. The polypeptide is Hydrolyase poxO (Penicillium oxalicum (strain 114-2 / CGMCC 5302) (Penicillium decumbens)).